Reading from the N-terminus, the 3424-residue chain is Genome polyprotein (3424 aa).

Positions 2–15 (SKKPGKSAAKRTVN) are interaction with host EXOC1. The Cytoplasmic segment spans residues 2–101 (SKKPGKSAAK…SVNKRKEKKK (100 aa)). A hydrophobic; homodimerization of capsid protein C region spans residues 35 to 70 (MLDVRGAPRLILALMAFFRFAAIKPTLGLKKRWRSV). Residues 102 to 118 (SFSTALLWITMITAVAG) constitute a propeptide, ER anchor for the capsid protein C, removed in mature form by serine protease NS3. The helical transmembrane segment at 102-122 (SFSTALLWITMITAVAGLKIS) threads the bilayer. The Extracellular portion of the chain corresponds to 123 to 244 (SHRDRPLLMV…TTKYLTKVEN (122 aa)). A glycan (N-linked (GlcNAc...) asparagine; by host) is linked at Asn133. The chain crosses the membrane as a helical span at residues 245–265 (WVIRNPGYALVALATAWMLGS). The Cytoplasmic portion of the chain corresponds to 266-270 (NTPQR). Residues 271 to 285 (VVFMIMMMLIAPAYS) form a helical membrane-spanning segment. Topologically, residues 286–738 (LNCLGISNRD…GVFGTAFRSL (453 aa)) are extracellular. 8 disulfide bridges follow: Cys288–Cys315, Cys345–Cys401, Cys345–Cys406, Cys359–Cys390, Cys377–Cys401, Cys377–Cys406, Cys475–Cys573, and Cys590–Cys621. A fusion peptide region spans residues 383–396 (DRGWGNGCGLFGKG). Residues 739 to 759 (FGGMSWVTQALMGALLLWLGI) traverse the membrane as a helical segment. Residues 760-765 (SARERT) lie on the Cytoplasmic side of the membrane. Residues 766 to 786 (VSLIMLSVGGILLFLAVNVHA) traverse the membrane as a helical segment. Topologically, residues 787–1170 (DTGCAIDMAR…EVLRRRWTAN (384 aa)) are extracellular. Disulfide bonds link Cys790–Cys801, Cys841–Cys929, Cys965–Cys1009, Cys1067–Cys1116, Cys1078–Cys1099, Cys1078–Cys1100, Cys1099–Cys1103, and Cys1100–Cys1103. N-linked (GlcNAc...) asparagine; by host glycans are attached at residues Asn916 and Asn993. A helical transmembrane segment spans residues 1171-1191 (LALPTSALLMACFIFGGFTYL). Topologically, residues 1192–1213 (DLFRYFILVGAAFAEANSGGDV) are cytoplasmic. The helical transmembrane segment at 1214–1234 (VHLAMIAAFNIQPVALVTTFF) threads the bilayer. Residues 1235–1276 (RKNWTNRENMILIIAAACTQMACMELKIELFHVMNSLSLAWM) are Lumenal-facing. Residues 1277–1297 (ILKALTTGTTSTLAMPFLAAL) form a helical membrane-spanning segment. Residues 1298 to 1302 (SPPMN) lie on the Cytoplasmic side of the membrane. Residues 1303 to 1323 (WLGLDVVRCLLIMAGVAALIS) form a helical membrane-spanning segment. The Lumenal segment spans residues 1324–1333 (ERRESLAKKK). The helical transmembrane segment at 1334–1354 (GALLISAALALTGAFSPLVLQ) threads the bilayer. Residues 1355-1367 (GALMFTQSLGKRG) lie on the Cytoplasmic side of the membrane. The chain crosses the membrane as a helical span at residues 1368 to 1388 (WPASEVLTAVGMTFALAGSVA). At 1389–1391 (RLD) the chain is on the lumenal side. A helical membrane pass occupies residues 1392-1412 (GGTMAIPLATMAILAVAYVLS). The Cytoplasmic segment spans residues 1413 to 1469 (GKSTDMWLERCADISWINEAEITGTSPRLDVELDSNGDFKMINDPGVPMWMWTCRMG). The interacts with and activates NS3 protease stretch occupies residues 1420-1459 (LERCADISWINEAEITGTSPRLDVELDSNGDFKMINDPGV). An intramembrane region (helical) is located at residues 1470-1490 (LMAMAAYNPVLIPVSMAGYWM). The Cytoplasmic segment spans residues 1491-2167 (TVKIHKRGGV…ALEELPDTVE (677 aa)). Positions 1498 to 1675 (GGVMWDVPAP…ERQEEETPEA (178 aa)) constitute a Peptidase S7 domain. Active-site charge relay system; for serine protease NS3 activity residues include His1548, Asp1572, and Ser1632. In terms of domain architecture, Helicase ATP-binding spans 1678-1834 (PDMLKKRRLT…DSNAPIIDQE (157 aa)). The segment at 1682-1685 (KKRR) is important for RNA-binding. 1691–1698 (LHPGAGKT) contacts ATP. The short motif at 1782–1785 (DEAH) is the DEAH box element. One can recognise a Helicase C-terminal domain in the interval 1845 to 2009 (GFEWITEYTG…GLVAQLYGPE (165 aa)). An N6-acetyllysine; by host modification is found at Lys1886. The disordered stretch occupies residues 1944 to 1969 (APITPASAAQRRGRIGRDPTQSGDEY). The tract at residues 2160–2164 (EELPD) is regulates the ATPase activity of NS3 helicase. A helical membrane pass occupies residues 2168-2188 (TILLMTMMCVASLGMFTLMVH). Over 2189–2190 (RR) the chain is Lumenal. Positions 2191–2211 (GLGKTGLGTLVLATVTVLLWI) form an intramembrane region, helical. Over 2212 to 2213 (SD) the chain is Lumenal. A helical membrane pass occupies residues 2214–2234 (VPAPKIAGVLLIAFLLMIVLI). At 2235-2249 (PEPEKQRSQTDNHLA) the chain is on the cytoplasmic side. A helical transmembrane segment spans residues 2250–2264 (IFLVCVLLLIGAVSA). At 2265-2299 (NEMGWLETTKKDIGKLFRSSGDTQEQSTWQSWAPE) the chain is on the lumenal side. The helical intramembrane region spans 2300-2320 (VRAATAWAGYAGLTVFLTPLF). At 2321-2342 (RHLITTQYVSFSLTAITAQASA) the chain is on the lumenal side. A helical membrane pass occupies residues 2343 to 2363 (LFGLSAGYPFVGIDLAVGFLL). At 2364-2371 (LGCYGQYN) the chain is on the cytoplasmic side. Residues 2372–2392 (LPTAVATGLLLLAHYGYMIPG) traverse the membrane as a helical segment. Residues 2393–2439 (WQAEAMRAAQKRTAAGVMKNAVVDGIVATDIPEVDTATPITEKKLGQ) lie on the Lumenal side of the membrane. Residues 2440–2460 (ILLILLCGASLLVKFDTMVLV) form a helical membrane-spanning segment. The Cytoplasmic portion of the chain corresponds to 2461–3424 (EAGVLTTSAM…PSPVLFTGAI (964 aa)). The mRNA cap 0-1 NS5-type MT domain maps to 2520-2784 (GGGSAPTLGE…DVCLGSGTRA (265 aa)). Position 2575 (Ser2575) interacts with S-adenosyl-L-methionine. Residue Ser2575 is modified to Phosphoserine. Residue Lys2580 is the For 2'-O-MTase activity of the active site. Residues Gly2605, Trp2606, Thr2623, Lys2624, Asp2650, and Val2651 each coordinate S-adenosyl-L-methionine. Asp2665 acts as the For 2'-O-MTase activity in catalysis. Residue Ile2666 participates in S-adenosyl-L-methionine binding. Active-site for 2'-O-MTase activity residues include Lys2700 and Glu2736. An S-adenosyl-L-methionine-binding site is contributed by Tyr2738. Residues Glu2958, His2962, Cys2967, and Cys2970 each coordinate Zn(2+). The RdRp catalytic domain occupies 3048–3200 (GNMFADDTAG…KPIDDRFASA (153 aa)). Residues His3235, Cys3251, and Cys3370 each coordinate Zn(2+).

This sequence in the N-terminal section; belongs to the class I-like SAM-binding methyltransferase superfamily. mRNA cap 0-1 NS5-type methyltransferase family. Homodimer. Interacts (via N-terminus) with host EXOC1 (via C-terminus); this interaction results in EXOC1 degradation through the proteasome degradation pathway. In terms of assembly, forms heterodimers with envelope protein E in the endoplasmic reticulum and Golgi. As to quaternary structure, homodimer; in the endoplasmic reticulum and Golgi. Interacts with protein prM. Interacts with non-structural protein 1. Homodimer; Homohexamer when secreted. Interacts with envelope protein E. NS1 interacts with NS4B. Interacts with host complement protein CFH; this interaction leads to the degradation of C3. In terms of assembly, interacts (via N-terminus) with serine protease NS3. As to quaternary structure, forms a heterodimer with serine protease NS3. May form homooligomers. Forms a heterodimer with NS2B. Interacts with non-structural protein 2A (via N-terminus). Interacts with NS4B. Interacts with unphosphorylated RNA-directed RNA polymerase NS5; this interaction stimulates RNA-directed RNA polymerase NS5 guanylyltransferase activity. In terms of assembly, interacts with serine protease NS3. As to quaternary structure, homodimer. Interacts with host STAT2; this interaction inhibits the phosphorylation of the latter, and, when all viral proteins are present (polyprotein), targets STAT2 for degradation. Interacts with serine protease NS3. In terms of processing, specific enzymatic cleavages in vivo yield mature proteins. Cleavages in the lumen of endoplasmic reticulum are performed by host signal peptidase, whereas cleavages in the cytoplasmic side are performed by serine protease NS3. Signal cleavage at the 2K-4B site requires a prior NS3 protease-mediated cleavage at the 4A-2K site. Post-translationally, cleaved in post-Golgi vesicles by a host furin, releasing the mature small envelope protein M, and peptide pr. This cleavage is incomplete as up to 30% of viral particles still carry uncleaved prM. N-glycosylated. In terms of processing, N-glycosylated. The excreted form is glycosylated and this is required for efficient secretion of the protein from infected cells. Post-translationally, acetylated by host KAT5. Acetylation modulates NS3 RNA-binding and unwinding activities and plays an important positive role for viral replication. Phosphorylated on serines residues. This phosphorylation may trigger NS5 nuclear localization.

It is found in the virion. It localises to the host nucleus. Its subcellular location is the host cytoplasm. The protein localises to the host perinuclear region. The protein resides in the secreted. It is found in the virion membrane. It localises to the host endoplasmic reticulum membrane. The enzyme catalyses Selective hydrolysis of -Xaa-Xaa-|-Yaa- bonds in which each of the Xaa can be either Arg or Lys and Yaa can be either Ser or Ala.. It catalyses the reaction RNA(n) + a ribonucleoside 5'-triphosphate = RNA(n+1) + diphosphate. It carries out the reaction a ribonucleoside 5'-triphosphate + H2O = a ribonucleoside 5'-diphosphate + phosphate + H(+). The catalysed reaction is ATP + H2O = ADP + phosphate + H(+). The enzyme catalyses a 5'-end (5'-triphosphoguanosine)-ribonucleoside in mRNA + S-adenosyl-L-methionine = a 5'-end (N(7)-methyl 5'-triphosphoguanosine)-ribonucleoside in mRNA + S-adenosyl-L-homocysteine. It catalyses the reaction a 5'-end (N(7)-methyl 5'-triphosphoguanosine)-ribonucleoside in mRNA + S-adenosyl-L-methionine = a 5'-end (N(7)-methyl 5'-triphosphoguanosine)-(2'-O-methyl-ribonucleoside) in mRNA + S-adenosyl-L-homocysteine + H(+). Plays a role in virus budding by binding to the cell membrane and gathering the viral RNA into a nucleocapsid that forms the core of a mature virus particle. During virus entry, may induce genome penetration into the host cytoplasm after hemifusion induced by the surface proteins. Can migrate to the cell nucleus where it modulates host functions. Overcomes the anti-viral effects of host EXOC1 by sequestering and degrading the latter through the proteasome degradation pathway. In terms of biological role, inhibits RNA silencing by interfering with host Dicer. Functionally, prevents premature fusion activity of envelope proteins in trans-Golgi by binding to envelope protein E at pH6.0. After virion release in extracellular space, gets dissociated from E dimers. Its function is as follows. Acts as a chaperone for envelope protein E during intracellular virion assembly by masking and inactivating envelope protein E fusion peptide. prM is the only viral peptide matured by host furin in the trans-Golgi network probably to avoid catastrophic activation of the viral fusion activity in acidic Golgi compartment prior to virion release. prM-E cleavage is inefficient, and many virions are only partially matured. These uncleaved prM would play a role in immune evasion. May play a role in virus budding. Exerts cytotoxic effects by activating a mitochondrial apoptotic pathway through M ectodomain. May display a viroporin activity. In terms of biological role, binds to host cell surface receptor and mediates fusion between viral and cellular membranes. Envelope protein is synthesized in the endoplasmic reticulum in the form of heterodimer with protein prM. They play a role in virion budding in the ER, and the newly formed immature particle is covered with 60 spikes composed of heterodimer between precursor prM and envelope protein E. The virion is transported to the Golgi apparatus where the low pH causes dissociation of PrM-E heterodimers and formation of E homodimers. prM-E cleavage is inefficient, and many virions are only partially matured. These uncleaved prM would play a role in immune evasion. Functionally, involved in immune evasion, pathogenesis and viral replication. Once cleaved off the polyprotein, is targeted to three destinations: the viral replication cycle, the plasma membrane and the extracellular compartment. Essential for viral replication. Required for formation of the replication complex and recruitment of other non-structural proteins to the ER-derived membrane structures. Excreted as a hexameric lipoparticle that plays a role against host immune response. Antagonizing the complement function. Binds to the host macrophages and dendritic cells. Inhibits signal transduction originating from Toll-like receptor 3 (TLR3). Its function is as follows. Component of the viral RNA replication complex that functions in virion assembly and antagonizes the host alpha/beta interferon antiviral response. Required cofactor for the serine protease function of NS3. May have membrane-destabilizing activity and form viroporins. In terms of biological role, displays three enzymatic activities: serine protease, NTPase and RNA helicase. NS3 serine protease, in association with NS2B, performs its autocleavage and cleaves the polyprotein at dibasic sites in the cytoplasm: C-prM, NS2A-NS2B, NS2B-NS3, NS3-NS4A, NS4A-2K and NS4B-NS5. NS3 RNA helicase binds RNA and unwinds dsRNA in the 3' to 5' direction. Functionally, regulates the ATPase activity of the NS3 helicase activity. NS4A allows NS3 helicase to conserve energy during unwinding. Its function is as follows. Functions as a signal peptide for NS4B and is required for the interferon antagonism activity of the latter. Induces the formation of ER-derived membrane vesicles where the viral replication takes place. Inhibits interferon (IFN)-induced host STAT1 phosphorylation and nuclear translocation, thereby preventing the establishment of cellular antiviral state by blocking the IFN-alpha/beta pathway. Inhibits STAT2 translocation in the nucleus after IFN-alpha treatment. In terms of biological role, replicates the viral (+) and (-) RNA genome, and performs the capping of genomes in the cytoplasm. NS5 methylates viral RNA cap at guanine N-7 and ribose 2'-O positions. Besides its role in RNA genome replication, also prevents the establishment of cellular antiviral state by blocking the interferon-alpha/beta (IFN-alpha/beta) signaling pathway. Inhibits host TYK2 and STAT2 phosphorylation, thereby preventing activation of JAK-STAT signaling pathway. This Aedes sp. (Human) protein is Genome polyprotein.